Reading from the N-terminus, the 177-residue chain is Large ribosomal subunit protein uL5 (177 aa).

The protein belongs to the universal ribosomal protein uL5 family. Part of the 50S ribosomal subunit; part of the 5S rRNA/L5/L18/L25 subcomplex. Contacts the 5S rRNA and the P site tRNA. Forms a bridge to the 30S subunit in the 70S ribosome.

Functionally, this is one of the proteins that bind and probably mediate the attachment of the 5S RNA into the large ribosomal subunit, where it forms part of the central protuberance. In the 70S ribosome it contacts protein S13 of the 30S subunit (bridge B1b), connecting the 2 subunits; this bridge is implicated in subunit movement. Contacts the P site tRNA; the 5S rRNA and some of its associated proteins might help stabilize positioning of ribosome-bound tRNAs. The sequence is that of Large ribosomal subunit protein uL5 from Wolbachia sp. subsp. Brugia malayi (strain TRS).